Here is a 2524-residue protein sequence, read N- to C-terminus: Highly reducing polyketide synthase Preu5 (2524 aa).

In terms of domain architecture, Ketosynthase family 3 (KS3) spans 5 to 426 (DTPIAIIGLS…GSNSAIVIEK (422 aa)). Residues Cys-175, His-310, and His-350 each act as for beta-ketoacyl synthase activity in the active site. The tract at residues 431 to 470 (DELGHETNGTNGVSVSNGVNGSNGFTNGSNGTNGHAENGN) is disordered. Positions 437-464 (TNGTNGVSVSNGVNGSNGFTNGSNGTNG) are enriched in low complexity. The segment at 559–882 (VFTGQGAQYA…TYLPSLVRNV (324 aa)) is malonyl-CoA:ACP transacylase (MAT) domain. Catalysis depends on Ser-648, which acts as the For malonyltransferase activity. Positions 950–1084 (HELLGRRVVS…GQIEPEFADM (135 aa)) are N-terminal hotdog fold. The region spanning 950-1264 (HELLGRRVVS…FRNIGSADEN (315 aa)) is the PKS/mFAS DH domain. Positions 950–1266 (HELLGRRVVS…NIGSADENID (317 aa)) are dehydratase (DH) domain. Residue His-982 is the Proton acceptor; for dehydratase activity of the active site. The tract at residues 1102–1264 (ADLLEHDIEG…FRNIGSADEN (163 aa)) is C-terminal hotdog fold. Catalysis depends on Asp-1171, which acts as the Proton donor; for dehydratase activity. Residues 1418–1611 (SQAVGDLADN…IPGVWDSEVQ (194 aa)) form a methyltransferase (CMet) domain region. The interval 1825 to 2139 (GSPDSIYFRR…SGDHLGKIVV (315 aa)) is enoylreductase (ER) domain. The ketoreductase (KR) domain stretch occupies residues 2164 to 2339 (GTYLVTGGTR…HTVSIALPIV (176 aa)). In terms of domain architecture, Carrier spans 2445-2522 (DPLEGLTEAL…ALATDILSQR (78 aa)). Ser-2482 carries the post-translational modification O-(pantetheine 4'-phosphoryl)serine.

It depends on pantetheine 4'-phosphate as a cofactor.

Functionally, highly reducing polyketide synthase; part of a gene cluster that mediates the biosynthesis of a yet unidentified natural product. This Preussia isomera (Coprophilous fungus) protein is Highly reducing polyketide synthase Preu5.